The following is a 580-amino-acid chain: Glutamine--tRNA ligase (580 aa).

Residues 41–51 carry the 'HIGH' region motif; sequence PEPNGYLHIGH. ATP contacts are provided by residues 42-44 and 48-54; these read EPN and HIGHAKA. L-glutamine-binding residues include Asp-74 and Tyr-218. ATP is bound by residues Thr-237, 285–286, and 293–295; these read RL and MSK. The 'KMSKS' region motif lies at 292–296; sequence VMSKR.

This sequence belongs to the class-I aminoacyl-tRNA synthetase family. As to quaternary structure, monomer.

The protein localises to the cytoplasm. It catalyses the reaction tRNA(Gln) + L-glutamine + ATP = L-glutaminyl-tRNA(Gln) + AMP + diphosphate. The protein is Glutamine--tRNA ligase of Xylella fastidiosa (strain Temecula1 / ATCC 700964).